Reading from the N-terminus, the 580-residue chain is Methyl-CpG-binding domain protein 4 (580 aa).

The disordered stretch occupies residues 1-36 (MGTTGLESLSLGDRGAAPTVTSSERLVPDPPNDLRK). The 73-residue stretch at 76-148 (ATAGTECRKS…EDFDFTVLSK (73 aa)) folds into the MBD domain. Phosphoserine is present on residues Ser-318 and Ser-428. Residue Asp-560 is part of the active site.

As to quaternary structure, interacts with MLH1.

It localises to the nucleus. In terms of biological role, mismatch-specific DNA N-glycosylase involved in DNA repair. Has thymine glycosylase activity and is specific for G:T mismatches within methylated and unmethylated CpG sites. Can also remove uracil or 5-fluorouracil in G:U mismatches. Has no lyase activity. Was first identified as methyl-CpG-binding protein. In Homo sapiens (Human), this protein is Methyl-CpG-binding domain protein 4.